The primary structure comprises 169 residues: Ribosome maturation factor RimP (169 aa).

It belongs to the RimP family.

It is found in the cytoplasm. In terms of biological role, required for maturation of 30S ribosomal subunits. This chain is Ribosome maturation factor RimP, found in Coprothermobacter proteolyticus (strain ATCC 35245 / DSM 5265 / OCM 4 / BT).